The chain runs to 230 residues: Ribonuclease 3 (230 aa).

Residues 1–134 enclose the RNase III domain; it reads MKQLEELLST…FLGALLLDKG (134 aa). Mg(2+) is bound at residue E47. D51 is an active-site residue. The Mg(2+) site is built by D120 and E123. Residue E123 is part of the active site. The DRBM domain maps to 160-229; sequence DYKTCLQEFL…AKNALAQLSE (70 aa).

Belongs to the ribonuclease III family. Homodimer. Mg(2+) is required as a cofactor.

Its subcellular location is the cytoplasm. It carries out the reaction Endonucleolytic cleavage to 5'-phosphomonoester.. Functionally, digests double-stranded RNA. Involved in the processing of primary rRNA transcript to yield the immediate precursors to the large and small rRNAs (23S and 16S). Processes some mRNAs, and tRNAs when they are encoded in the rRNA operon. Processes pre-crRNA and tracrRNA of type II CRISPR loci if present in the organism. In Streptococcus pyogenes serotype M3 (strain SSI-1), this protein is Ribonuclease 3.